Reading from the N-terminus, the 63-residue chain is MGRIRQTFIKRTGEELIEKFAGKFTSDFEANKKAVEEVARISTKTLRNRIAGYITAKVKKMNA.

This sequence belongs to the eukaryotic ribosomal protein eS17 family.

The sequence is that of Small ribosomal subunit protein eS17 from Methanococcus vannielii (strain ATCC 35089 / DSM 1224 / JCM 13029 / OCM 148 / SB).